The sequence spans 117 residues: Large ribosomal subunit protein bL20 (117 aa).

The protein belongs to the bacterial ribosomal protein bL20 family.

In terms of biological role, binds directly to 23S ribosomal RNA and is necessary for the in vitro assembly process of the 50S ribosomal subunit. It is not involved in the protein synthesizing functions of that subunit. The protein is Large ribosomal subunit protein bL20 of Glaesserella parasuis serovar 5 (strain SH0165) (Haemophilus parasuis).